Here is a 76-residue protein sequence, read N- to C-terminus: Sulfur carrier protein TusA (76 aa).

Cysteine 15 functions as the Cysteine persulfide intermediate in the catalytic mechanism.

The protein belongs to the sulfur carrier protein TusA family. In terms of assembly, mostly a monomer, a small portion forms homodimer via intermolecular disulfide bonds. Tightly interacts with DsrEFH.

The protein localises to the cytoplasm. Its pathway is energy metabolism; sulfur metabolism. Its function is as follows. Sulfur carrier protein involved in sulfur trafficking for oxidative dissimilatory sulfur metabolism. Component of a sulfur relay system that starts with the sulfur-mobilizing rhodanese-like protein Rhd_2599 (Alvin_2599), which transfers the sulfur from a low-molecular-weight thiol, maybe glutathione, to the TusA protein (Alvin_2600); TusA serves as the sulfur donor for DsrEFH, which persulfurates DsrC; persulfurated DsrC very probably serves as a direct substrate for reverse-acting sulfite reductase, DsrAB. TusA seems to be not exclusively dedicated to sulfur oxidation and may have other important roles in the cell. Might also act as a sulfur mediator required for 2-thiouridine formation of tRNA. The protein is Sulfur carrier protein TusA of Allochromatium vinosum (strain ATCC 17899 / DSM 180 / NBRC 103801 / NCIMB 10441 / D) (Chromatium vinosum).